A 303-amino-acid polypeptide reads, in one-letter code: tRNA pseudouridine synthase B (303 aa).

The active-site Nucleophile is aspartate 47.

This sequence belongs to the pseudouridine synthase TruB family. Type 1 subfamily.

It carries out the reaction uridine(55) in tRNA = pseudouridine(55) in tRNA. In terms of biological role, responsible for synthesis of pseudouridine from uracil-55 in the psi GC loop of transfer RNAs. This is tRNA pseudouridine synthase B from Legionella pneumophila subsp. pneumophila (strain Philadelphia 1 / ATCC 33152 / DSM 7513).